The following is a 682-amino-acid chain: DNA-directed RNA polymerase subunit beta' (682 aa).

Residues Cys69, Cys71, Cys87, and Cys90 each contribute to the Zn(2+) site. Mg(2+)-binding residues include Asp489, Asp491, and Asp493.

It belongs to the RNA polymerase beta' chain family. RpoC1 subfamily. In terms of assembly, in plastids the minimal PEP RNA polymerase catalytic core is composed of four subunits: alpha, beta, beta', and beta''. When a (nuclear-encoded) sigma factor is associated with the core the holoenzyme is formed, which can initiate transcription. It depends on Mg(2+) as a cofactor. Zn(2+) is required as a cofactor.

Its subcellular location is the plastid. The protein localises to the chloroplast. It catalyses the reaction RNA(n) + a ribonucleoside 5'-triphosphate = RNA(n+1) + diphosphate. In terms of biological role, DNA-dependent RNA polymerase catalyzes the transcription of DNA into RNA using the four ribonucleoside triphosphates as substrates. The sequence is that of DNA-directed RNA polymerase subunit beta' from Hordeum vulgare (Barley).